A 110-amino-acid chain; its full sequence is UPF0060 membrane protein Pfl01_4105 (110 aa).

A run of 4 helical transmembrane segments spans residues 5 to 25, 28 to 48, 59 to 79, and 84 to 104; these read LWFFLAALFEIAGCFAFWMWL, GKSALWVIPALISLTLFALLL, AYAAYGGIYIIASIGWLAVVE, and LGSDWIGVALCVIGATVILFG.

The protein belongs to the UPF0060 family.

It localises to the cell inner membrane. The polypeptide is UPF0060 membrane protein Pfl01_4105 (Pseudomonas fluorescens (strain Pf0-1)).